The chain runs to 104 residues: Large ribosomal subunit protein uL24 (104 aa).

The protein belongs to the universal ribosomal protein uL24 family. In terms of assembly, part of the 50S ribosomal subunit.

Functionally, one of two assembly initiator proteins, it binds directly to the 5'-end of the 23S rRNA, where it nucleates assembly of the 50S subunit. In terms of biological role, one of the proteins that surrounds the polypeptide exit tunnel on the outside of the subunit. The polypeptide is Large ribosomal subunit protein uL24 (Baumannia cicadellinicola subsp. Homalodisca coagulata).